Here is a 120-residue protein sequence, read N- to C-terminus: Large ribosomal subunit protein uL14 (120 aa).

This sequence belongs to the universal ribosomal protein uL14 family. As to quaternary structure, part of the 50S ribosomal subunit. Forms a cluster with proteins L3 and L19. In the 70S ribosome, L14 and L19 interact and together make contacts with the 16S rRNA in bridges B5 and B8.

In terms of biological role, binds to 23S rRNA. Forms part of two intersubunit bridges in the 70S ribosome. The protein is Large ribosomal subunit protein uL14 of Aster yellows witches'-broom phytoplasma (strain AYWB).